A 149-amino-acid chain; its full sequence is Large ribosomal subunit protein uL15 (149 aa).

The disordered stretch occupies residues 1–58; sequence MKLHNLRPAKGGEVKARKRVGRGYGSGLGHNAGRGRDGQNSRSGGGVRPGFEGGQMPL. Gly residues-rich tracts occupy residues 22–32 and 43–53; these read RGYGSGLGHNA and SGGGVRPGFEG.

This sequence belongs to the universal ribosomal protein uL15 family. In terms of assembly, part of the 50S ribosomal subunit.

Binds to the 23S rRNA. This Finegoldia magna (strain ATCC 29328 / DSM 20472 / WAL 2508) (Peptostreptococcus magnus) protein is Large ribosomal subunit protein uL15.